A 117-amino-acid chain; its full sequence is Large ribosomal subunit protein bL19 (117 aa).

Belongs to the bacterial ribosomal protein bL19 family.

This protein is located at the 30S-50S ribosomal subunit interface and may play a role in the structure and function of the aminoacyl-tRNA binding site. The chain is Large ribosomal subunit protein bL19 from Christiangramia forsetii (strain DSM 17595 / CGMCC 1.15422 / KT0803) (Gramella forsetii).